The primary structure comprises 112 residues: Cell cycle protein GpsB (112 aa).

A coiled-coil region spans residues 32 to 75; that stretch reads LDDIIKDYETYISTIEELRQENTRLKEEVKQAKKRQEAAQTTVS.

This sequence belongs to the GpsB family. In terms of assembly, forms polymers through the coiled coil domains. Interacts with PBP1, MreC and EzrA.

The protein localises to the cytoplasm. Functionally, divisome component that associates with the complex late in its assembly, after the Z-ring is formed, and is dependent on DivIC and PBP2B for its recruitment to the divisome. Together with EzrA, is a key component of the system that regulates PBP1 localization during cell cycle progression. Its main role could be the removal of PBP1 from the cell pole after pole maturation is completed. Also contributes to the recruitment of PBP1 to the division complex. Not essential for septum formation. The chain is Cell cycle protein GpsB from Streptococcus mutans serotype c (strain ATCC 700610 / UA159).